Here is a 214-residue protein sequence, read N- to C-terminus: MRIILLGAPGAGKGTQAQFIMEKYGIPQMCTGDMLRAAVKAGSELGLKAKEIMDAGKLVTHELVIALVKERITQDDCRDGFLLHGFPRTIPQADAMKEAGIKVDYVLEFDVPDELIVDRIVGRRVHAASGRVYHIKFNPPKVEDKDDVTGEELTIRKDDQEATVRKRLVEYHQQTAPLVSYYRKEADAGNTQYFKLDGTRKVAEVSAELATILG.

Position 10 to 15 (10 to 15 (GAGKGT)) interacts with ATP. Residues 30–59 (CTGDMLRAAVKAGSELGLKAKEIMDAGKLV) form an NMP region. AMP-binding positions include threonine 31, arginine 36, 57-59 (KLV), 85-88 (GFPR), and glutamine 92. The tract at residues 122 to 159 (GRRVHAASGRVYHIKFNPPKVEDKDDVTGEELTIRKDD) is LID. ATP is bound by residues arginine 123 and 132-133 (VY). AMP contacts are provided by arginine 156 and arginine 167. ATP is bound at residue arginine 200.

The protein belongs to the adenylate kinase family. As to quaternary structure, monomer.

Its subcellular location is the cytoplasm. The enzyme catalyses AMP + ATP = 2 ADP. It participates in purine metabolism; AMP biosynthesis via salvage pathway; AMP from ADP: step 1/1. In terms of biological role, catalyzes the reversible transfer of the terminal phosphate group between ATP and AMP. Plays an important role in cellular energy homeostasis and in adenine nucleotide metabolism. The polypeptide is Adenylate kinase (Yersinia enterocolitica).